The chain runs to 395 residues: Elongation factor Tu (395 aa).

In terms of domain architecture, tr-type G spans 10–204 (KPHCNIGTIG…TVDSYIPDPQ (195 aa)). Residues 19–26 (GHVDHGKT) are G1. Residue 19–26 (GHVDHGKT) participates in GTP binding. Position 26 (T26) interacts with Mg(2+). The segment at 61-65 (GITIS) is G2. Residues 82–85 (DCPG) are G3. GTP contacts are provided by residues 82-86 (DCPGH) and 137-140 (NKCD). The tract at residues 137 to 140 (NKCD) is G4. A G5 region spans residues 173-175 (SAL).

It belongs to the TRAFAC class translation factor GTPase superfamily. Classic translation factor GTPase family. EF-Tu/EF-1A subfamily. As to quaternary structure, monomer.

Its subcellular location is the cytoplasm. The enzyme catalyses GTP + H2O = GDP + phosphate + H(+). GTP hydrolase that promotes the GTP-dependent binding of aminoacyl-tRNA to the A-site of ribosomes during protein biosynthesis. The chain is Elongation factor Tu from Agathobacter rectalis (strain ATCC 33656 / DSM 3377 / JCM 17463 / KCTC 5835 / VPI 0990) (Eubacterium rectale).